Reading from the N-terminus, the 505-residue chain is Lysine--tRNA ligase (505 aa).

Mg(2+) contacts are provided by Glu-415 and Glu-422.

The protein belongs to the class-II aminoacyl-tRNA synthetase family. In terms of assembly, homodimer. Mg(2+) is required as a cofactor.

The protein localises to the cytoplasm. The catalysed reaction is tRNA(Lys) + L-lysine + ATP = L-lysyl-tRNA(Lys) + AMP + diphosphate. The protein is Lysine--tRNA ligase (lysS) of Escherichia coli (strain K12).